We begin with the raw amino-acid sequence, 468 residues long: ATP synthase subunit beta (468 aa).

155–162 contributes to the ATP binding site; the sequence is GGAGVGKT.

It belongs to the ATPase alpha/beta chains family. As to quaternary structure, F-type ATPases have 2 components, CF(1) - the catalytic core - and CF(0) - the membrane proton channel. CF(1) has five subunits: alpha(3), beta(3), gamma(1), delta(1), epsilon(1). CF(0) has three main subunits: a(1), b(2) and c(9-12). The alpha and beta chains form an alternating ring which encloses part of the gamma chain. CF(1) is attached to CF(0) by a central stalk formed by the gamma and epsilon chains, while a peripheral stalk is formed by the delta and b chains.

It localises to the cell membrane. It carries out the reaction ATP + H2O + 4 H(+)(in) = ADP + phosphate + 5 H(+)(out). Produces ATP from ADP in the presence of a proton gradient across the membrane. The catalytic sites are hosted primarily by the beta subunits. This chain is ATP synthase subunit beta, found in Streptococcus uberis (strain ATCC BAA-854 / 0140J).